We begin with the raw amino-acid sequence, 258 residues long: Type III pantothenate kinase (258 aa).

6 to 13 (DVGNTNIV) is a binding site for ATP. Substrate-binding positions include Y100 and 107-110 (GADR). D109 acts as the Proton acceptor in catalysis. Residue D129 coordinates K(+). T132 contributes to the ATP binding site. Residue T184 coordinates substrate.

This sequence belongs to the type III pantothenate kinase family. In terms of assembly, homodimer. The cofactor is NH4(+). Requires K(+) as cofactor.

Its subcellular location is the cytoplasm. The enzyme catalyses (R)-pantothenate + ATP = (R)-4'-phosphopantothenate + ADP + H(+). It participates in cofactor biosynthesis; coenzyme A biosynthesis; CoA from (R)-pantothenate: step 1/5. Catalyzes the phosphorylation of pantothenate (Pan), the first step in CoA biosynthesis. This chain is Type III pantothenate kinase, found in Clostridium botulinum (strain Loch Maree / Type A3).